Here is a 167-residue protein sequence, read N- to C-terminus: NADH-quinone oxidoreductase subunit B (167 aa).

[4Fe-4S] cluster-binding residues include cysteine 48, cysteine 49, cysteine 113, and cysteine 143.

Belongs to the complex I 20 kDa subunit family. In terms of assembly, NDH-1 is composed of 14 different subunits. Subunits NuoB, C, D, E, F, and G constitute the peripheral sector of the complex. Requires [4Fe-4S] cluster as cofactor.

It localises to the cell membrane. The enzyme catalyses a quinone + NADH + 5 H(+)(in) = a quinol + NAD(+) + 4 H(+)(out). In terms of biological role, NDH-1 shuttles electrons from NADH, via FMN and iron-sulfur (Fe-S) centers, to quinones in the respiratory chain. Couples the redox reaction to proton translocation (for every two electrons transferred, four hydrogen ions are translocated across the cytoplasmic membrane), and thus conserves the redox energy in a proton gradient. The protein is NADH-quinone oxidoreductase subunit B of Wolbachia pipientis subsp. Culex pipiens (strain wPip).